The primary structure comprises 599 residues: Sulfite reductase [NADPH] flavoprotein alpha-component (599 aa).

The region spanning 64–202 (ITIISASQTG…AASEWRARVV (139 aa)) is the Flavodoxin-like domain. Residues 70 to 75 (SQTGNA), 117 to 120 (STQG), and 153 to 162 (LGDSSYEFFC) contribute to the FMN site. One can recognise an FAD-binding FR-type domain in the interval 234-448 (DAPLVASLSV…IEHNDNFRLP (215 aa)). FAD-binding positions include T322, A356, 386-389 (RLYS), 404-406 (TVG), Y410, and 419-422 (GGAS). NADP(+) contacts are provided by residues 519–520 (SR), 525–529 (KVYVQ), and D561. Residue Y599 participates in FAD binding.

Belongs to the NADPH-dependent sulphite reductase flavoprotein subunit CysJ family. This sequence in the N-terminal section; belongs to the flavodoxin family. The protein in the C-terminal section; belongs to the flavoprotein pyridine nucleotide cytochrome reductase family. In terms of assembly, alpha(8)-beta(8). The alpha component is a flavoprotein, the beta component is a hemoprotein. FAD is required as a cofactor. Requires FMN as cofactor.

The enzyme catalyses hydrogen sulfide + 3 NADP(+) + 3 H2O = sulfite + 3 NADPH + 4 H(+). Its pathway is sulfur metabolism; hydrogen sulfide biosynthesis; hydrogen sulfide from sulfite (NADPH route): step 1/1. Its function is as follows. Component of the sulfite reductase complex that catalyzes the 6-electron reduction of sulfite to sulfide. This is one of several activities required for the biosynthesis of L-cysteine from sulfate. The flavoprotein component catalyzes the electron flow from NADPH -&gt; FAD -&gt; FMN to the hemoprotein component. The chain is Sulfite reductase [NADPH] flavoprotein alpha-component from Shigella boydii serotype 4 (strain Sb227).